Here is a 495-residue protein sequence, read N- to C-terminus: Heterogeneous nuclear ribonucleoprotein Q (495 aa).

The span at 1 to 10 (MSDARDNDDR) shows a compositional bias: basic and acidic residues. Positions 1 to 101 (MSDARDNDDR…KPPSPIDDED (101 aa)) are disordered. Acidic residues-rich tracts occupy residues 11–46 (VDFE…DDDV) and 67–101 (MEDV…DDED). 3 consecutive RRM domains span residues 116 to 194 (SEVF…LSET), 196 to 278 (NRLF…WADP), and 292 to 368 (KALY…LAKP). The interval 452 to 495 (MPMAAAPPQRPRRNDRNNGSSGGSGRDNSHEHDGNRGGRRYRPY) is disordered. Over residues 478–487 (DNSHEHDGNR) the composition is skewed to basic and acidic residues.

In terms of assembly, interacts with LHP1 in the nucleus on a common set of chromatin regions. As to expression, predominantly expressed in vascular and meristematic tissues. Expressed throughout development in seedlings, roots, leaves, floral buds and siliques.

The protein localises to the nucleus. It is found in the cytoplasm. Its subcellular location is the microsome. In terms of biological role, transcriptional activator that binds DNA on GAGA-like motif and 5'-(C/G)ACGTG(G/T)C(A/G)-3' consensus motif in the promoters of target genes. Component of ribonucleosomes, which are complexes of at least 20 other different heterogeneous nuclear ribonucleoproteins (hnRNP). hnRNP play an important role in processing of precursor mRNA in the nucleus. Required during flower development and for cell fate determination. Acts both as an antagonist and as a promoter of polycomb LHP1 gene regulation activity, depending of target genes, to regulate the transcription of stress-responsive and flowering genes. May regulate histone H3 trimethylation on lysine 27 (H3K27me3). Recognizes and binds histone H3 tails methylated at 'Lys-4' (H3K4me) and acetylated at 'Lys-9' (H3K9ac), leading to epigenetic activation. When in complex with LHP1, recognizes and binds histone H3 tails methylated at 'Lys-4' (H3K4me) and 'Lys-27' (H3K27me), mostly corresponding to stress-responsive genes. May function as a suppressor of cell-autonomous immune responses involving glucosinolates, salicylic acid (SA) and jasmonic acid (JA) pathways toward pathogenic bacteria and fungi. This chain is Heterogeneous nuclear ribonucleoprotein Q, found in Arabidopsis thaliana (Mouse-ear cress).